The sequence spans 119 residues: Large ribosomal subunit protein uL18 (119 aa).

The protein belongs to the universal ribosomal protein uL18 family. As to quaternary structure, part of the 50S ribosomal subunit; part of the 5S rRNA/L5/L18/L25 subcomplex. Contacts the 5S and 23S rRNAs.

Its function is as follows. This is one of the proteins that bind and probably mediate the attachment of the 5S RNA into the large ribosomal subunit, where it forms part of the central protuberance. The protein is Large ribosomal subunit protein uL18 of Legionella pneumophila (strain Paris).